The sequence spans 779 residues: Ribonucleoside-diphosphate reductase large subunit (779 aa).

Substrate is bound by residues Ser-178, 193 to 194 (SC), Gly-222, 420 to 424 (NLCIE), and 614 to 618 (PTATS). A disulfide bond links Cys-194 and Cys-440. Catalysis depends on Asn-420, which acts as the Proton acceptor. Cys-422 functions as the Cysteine radical intermediate in the catalytic mechanism. Catalysis depends on Glu-424, which acts as the Proton acceptor.

Belongs to the ribonucleoside diphosphate reductase large chain family. Heterotetramer composed of a homodimer of the large subunit (R1) and a homodimer of the small subunit (R2). Larger multisubunit protein complex are also active, composed of (R1)n(R2)n.

The enzyme catalyses a 2'-deoxyribonucleoside 5'-diphosphate + [thioredoxin]-disulfide + H2O = a ribonucleoside 5'-diphosphate + [thioredoxin]-dithiol. With respect to regulation, under complex allosteric control mediated by deoxynucleoside triphosphates and ATP binding. The type of nucleotide bound at the specificity site determines substrate preference. It seems probable that ATP makes the enzyme reduce CDP and UDP, dGTP favors ADP reduction and dTTP favors GDP reduction. In terms of biological role, ribonucleoside-diphosphate reductase holoenzyme provides the precursors necessary for viral DNA synthesis. Allows virus growth in non-dividing cells. Catalyzes the biosynthesis of deoxyribonucleotides from the corresponding ribonucleotides. The protein is Ribonucleoside-diphosphate reductase large subunit of Ornithodoros (relapsing fever ticks).